The chain runs to 987 residues: Pro-apoptotic serine protease NMA111 (987 aa).

The segment at methionine 1–valine 29 is disordered. A compositionally biased stretch (polar residues) spans serine 11–phenylalanine 28. Residues valine 69 to leucine 262 form a serine protease region. Active-site charge relay system residues include histidine 110, aspartate 141, and serine 224. 2 consecutive PDZ domains span residues glutamate 279–glutamine 364 and proline 878–aspartate 950.

This sequence belongs to the peptidase S1C family.

It is found in the nucleus. Functionally, nuclear serine protease which mediates apoptosis. The chain is Pro-apoptotic serine protease NMA111 (NMA111) from Debaryomyces hansenii (strain ATCC 36239 / CBS 767 / BCRC 21394 / JCM 1990 / NBRC 0083 / IGC 2968) (Yeast).